The primary structure comprises 203 residues: bMERB domain-containing protein 1 (203 aa).

One can recognise a bMERB domain in the interval 3–149 (LKQSLSVHLE…EQEEDKEMAD (147 aa)). A disordered region spans residues 160–186 (KVTKSSASSRAEKKAEPPPSKPTVAKT).

The protein is bMERB domain-containing protein 1 (Bmerb1) of Rattus norvegicus (Rat).